We begin with the raw amino-acid sequence, 43 residues long: Potassium channel toxin gamma-KTx 4.8 (43 aa).

4 disulfides stabilise this stretch: Cys-5–Cys-23, Cys-11–Cys-34, Cys-20–Cys-39, and Cys-24–Cys-41.

This sequence belongs to the ergtoxin family. Gamma-KTx 4 subfamily. As to expression, expressed by the venom gland.

It is found in the secreted. Its function is as follows. Reversibly blocks Kv11/ERG potassium channels. This is Potassium channel toxin gamma-KTx 4.8 from Centruroides elegans (Bark scorpion).